Consider the following 134-residue polypeptide: Small ribosomal subunit protein uS11 (134 aa).

It belongs to the universal ribosomal protein uS11 family. In terms of assembly, part of the 30S ribosomal subunit. Interacts with proteins S7 and S18. Binds to IF-3.

Its function is as follows. Located on the platform of the 30S subunit, it bridges several disparate RNA helices of the 16S rRNA. Forms part of the Shine-Dalgarno cleft in the 70S ribosome. The polypeptide is Small ribosomal subunit protein uS11 (Variovorax paradoxus (strain S110)).